A 154-amino-acid polypeptide reads, in one-letter code: Large ribosomal subunit protein uL15 (154 aa).

Residues 17 to 44 (KRVGRGIGSGTGKTGGRGVKGQRSRSGV) form a disordered region. Gly residues predominate over residues 21–35 (RGIGSGTGKTGGRGV).

This sequence belongs to the universal ribosomal protein uL15 family. Part of the 50S ribosomal subunit.

In terms of biological role, binds to the 23S rRNA. The protein is Large ribosomal subunit protein uL15 of Bartonella henselae (strain ATCC 49882 / DSM 28221 / CCUG 30454 / Houston 1) (Rochalimaea henselae).